A 1387-amino-acid polypeptide reads, in one-letter code: Collagen-like protein 6 (1387 aa).

N6 carries N-linked (GlcNAc...) asparagine; by host glycosylation. 6 consecutive Collagen-like domains span residues 95-154 (GNNG…KGDI), 161-220 (GDKG…KGDN), 266-325 (GEKG…KGEM), 344-403 (GSKG…KGEK), 450-508 (IKGD…KGDI), and 512-751 (GEKG…SGSS). Disordered stretches follow at residues 98–219 (GNNG…DKGD), 268–422 (KGEI…QNQG), and 454–753 (KGEK…SSCQ). Composition is skewed to basic and acidic residues over residues 114–181 (IKGD…KGSK), 189–199 (SKGDNGDKGSK), 207–219 (SKGD…DKGD), 268–340 (KGEI…DGIK), 364–382 (KGDR…KGDN), 390–405 (SKGD…EKGE), 454–535 (KGEK…KGDI), and 544–747 (KGEK…DKGE). N794, N814, N819, N826, N846, N886, N894, N969, N1032, N1077, N1123, N1200, N1224, N1232, and N1233 each carry an N-linked (GlcNAc...) asparagine; by host glycan.

In terms of processing, may be hydroxylated on lysine by the viral-encoded procollagen-lysine,2-oxoglutarate 5-dioxygenase.

The protein resides in the virion. May participate in the formation of a layer of cross-linked glycosylated fibrils at the viral surface thus giving it a hairy-like appearance. This chain is Collagen-like protein 6, found in Acanthamoeba polyphaga mimivirus (APMV).